Reading from the N-terminus, the 531-residue chain is Peptide chain release factor 3 (531 aa).

One can recognise a tr-type G domain in the interval 13-282 (AKRRTFAIIS…TLIEHAPPPK (270 aa)). GTP-binding positions include 22 to 29 (SHPDAGKT), 90 to 94 (DTPGH), and 144 to 147 (NKLD).

This sequence belongs to the TRAFAC class translation factor GTPase superfamily. Classic translation factor GTPase family. PrfC subfamily.

Its subcellular location is the cytoplasm. Increases the formation of ribosomal termination complexes and stimulates activities of RF-1 and RF-2. It binds guanine nucleotides and has strong preference for UGA stop codons. It may interact directly with the ribosome. The stimulation of RF-1 and RF-2 is significantly reduced by GTP and GDP, but not by GMP. The polypeptide is Peptide chain release factor 3 (Psychrobacter sp. (strain PRwf-1)).